The following is a 79-amino-acid chain: U-actitoxin-Avd9d (79 aa).

Positions 1–19 are cleaved as a signal peptide; that stretch reads NLKVLAVFVLCAILVVVTA. Residues 20–37 constitute a propeptide that is removed on maturation; it reads ERRGTETGGYKKDTLEDL. The region spanning 44–79 is the ShKT domain; it reads CFDSFKEATCHMAKTNRLCKTSAKYQINCKKTCGLC. 3 disulfides stabilise this stretch: C44–C79, C53–C72, and C62–C76. The interval 67-68 is crucial for binding to potassium channels; the sequence is KY.

It belongs to the sea anemone type 1 potassium channel toxin family. Type 1b subfamily.

It localises to the secreted. The protein resides in the nematocyst. In terms of biological role, inhibits voltage-gated potassium channels (Kv1/KCNA). The polypeptide is U-actitoxin-Avd9d (Anemonia viridis (Snakelocks anemone)).